The primary structure comprises 270 residues: Elongation factor Ts (270 aa).

The segment at T77–V80 is involved in Mg(2+) ion dislocation from EF-Tu.

Belongs to the EF-Ts family.

It localises to the cytoplasm. Functionally, associates with the EF-Tu.GDP complex and induces the exchange of GDP to GTP. It remains bound to the aminoacyl-tRNA.EF-Tu.GTP complex up to the GTP hydrolysis stage on the ribosome. The protein is Elongation factor Ts of Nocardioides sp. (strain ATCC BAA-499 / JS614).